The primary structure comprises 290 residues: 4-diphosphocytidyl-2-C-methyl-D-erythritol kinase (290 aa).

Lysine 20 is an active-site residue. An ATP-binding site is contributed by proline 104–serine 114. Residue aspartate 146 is part of the active site.

This sequence belongs to the GHMP kinase family. IspE subfamily.

It carries out the reaction 4-CDP-2-C-methyl-D-erythritol + ATP = 4-CDP-2-C-methyl-D-erythritol 2-phosphate + ADP + H(+). It functions in the pathway isoprenoid biosynthesis; isopentenyl diphosphate biosynthesis via DXP pathway; isopentenyl diphosphate from 1-deoxy-D-xylulose 5-phosphate: step 3/6. Its function is as follows. Catalyzes the phosphorylation of the position 2 hydroxy group of 4-diphosphocytidyl-2C-methyl-D-erythritol. In Shewanella frigidimarina (strain NCIMB 400), this protein is 4-diphosphocytidyl-2-C-methyl-D-erythritol kinase.